We begin with the raw amino-acid sequence, 597 residues long: uncharacterized protein (597 aa).

Helical transmembrane passes span 37-57, 67-87, 109-129, 134-154, and 162-182; these read VLII…LWPV, IFWL…LQFA, GGER…YAAI, SVSL…FIAW, and ALMT…LAIV. A Histidine kinase domain is found at 393–597; the sequence is HQLARDLHDG…QITIFVPIES (205 aa).

It localises to the cell membrane. This is an uncharacterized protein from Chloroflexus aurantiacus (strain ATCC 29366 / DSM 635 / J-10-fl).